A 292-amino-acid chain; its full sequence is Cytochrome c1, heme protein, mitochondrial (292 aa).

The transit peptide at 1–46 (MFRSFSTAAKQAVKGTYVQRAIVGGAAVVGIGASTMLYADSLTADA) directs the protein to the mitochondrion. The Mitochondrial intermembrane segment spans residues 47-253 (MTAAEHGLHA…SEPEHDERKR (207 aa)). Residues 73-226 (SSIRRGYQVY…DLVEYEDGTP (154 aa)) enclose the Cytochrome c domain. Residues Cys-86, Cys-89, and His-90 each coordinate heme c. Positions 117-137 (FEYDDEPDDQGNPKKRPGKLA) are disordered. Met-210 lines the heme c pocket. Residues 254–272 (LGLKAMIVLSSLYLLSVWV) form a helical membrane-spanning segment. Residues 273-292 (KKFKWASIKSRKIVFNPPKK) are Mitochondrial matrix-facing.

The protein belongs to the cytochrome c family. In terms of assembly, component of the ubiquinol-cytochrome c oxidoreductase (cytochrome b-c1 complex, complex III, CIII), a multisubunit enzyme composed of 3 respiratory subunits cytochrome b, cytochrome c1 and Rieske protein, 2 core protein subunits, and additional low-molecular weight protein subunits. The complex exists as an obligatory dimer and forms supercomplexes (SCs) in the inner mitochondrial membrane with cytochrome c oxidase (complex IV, CIV). Heme c serves as cofactor.

The protein localises to the mitochondrion inner membrane. The enzyme catalyses a quinol + 2 Fe(III)-[cytochrome c](out) = a quinone + 2 Fe(II)-[cytochrome c](out) + 2 H(+)(out). Its function is as follows. Component of the ubiquinol-cytochrome c oxidoreductase, a multisubunit transmembrane complex that is part of the mitochondrial electron transport chain which drives oxidative phosphorylation. The respiratory chain contains 3 multisubunit complexes succinate dehydrogenase (complex II, CII), ubiquinol-cytochrome c oxidoreductase (cytochrome b-c1 complex, complex III, CIII) and cytochrome c oxidase (complex IV, CIV), that cooperate to transfer electrons derived from NADH and succinate to molecular oxygen, creating an electrochemical gradient over the inner membrane that drives transmembrane transport and the ATP synthase. The cytochrome b-c1 complex catalyzes electron transfer from ubiquinol to cytochrome c, linking this redox reaction to translocation of protons across the mitochondrial inner membrane, with protons being carried across the membrane as hydrogens on the quinol. In the process called Q cycle, 2 protons are consumed from the matrix, 4 protons are released into the intermembrane space and 2 electrons are passed to cytochrome c. Cytochrome c1 is a catalytic core subunit containing a c-type heme. It transfers electrons from the [2Fe-2S] iron-sulfur cluster of the Rieske protein to cytochrome c. This is Cytochrome c1, heme protein, mitochondrial (CYT1) from Kluyveromyces lactis (strain ATCC 8585 / CBS 2359 / DSM 70799 / NBRC 1267 / NRRL Y-1140 / WM37) (Yeast).